A 225-amino-acid polypeptide reads, in one-letter code: Large ribosomal subunit protein uL1 (225 aa).

The protein belongs to the universal ribosomal protein uL1 family. As to quaternary structure, part of the 50S ribosomal subunit.

Functionally, binds directly to 23S rRNA. Probably involved in E site tRNA release. In terms of biological role, protein L1 is also a translational repressor protein, it controls the translation of its operon by binding to its mRNA. The sequence is that of Large ribosomal subunit protein uL1 from Thermofilum pendens (strain DSM 2475 / Hrk 5).